A 46-amino-acid polypeptide reads, in one-letter code: uncharacterized protein (46 aa).

A helical transmembrane segment spans residues 20–42; that stretch reads MAMIWVVAALVIALVVGTALNYI.

Its subcellular location is the membrane. This is an uncharacterized protein from Bacillus subtilis (strain 168).